A 512-amino-acid polypeptide reads, in one-letter code: MSQDQPIVLDPTYASFDAAARPADLGATHFIGIGGAGMSVLAEMLHAEGVAVDGSDRAHSAKTDRLETLGITVEFGQRAENVAQAETVVYSSAIKPDNPEIVAAHAAGKRIVHRSDILALLMNGKRAVTVAGAHGKTTTSSMLSHILVNAGADPSYAIGGFIQGPDGTTLDGGHAGKGDILVAEADESDGSFAKYHPTIAIITNCEADHLDHYGDEAHYRAAFVAHAGRATGHVIISIDDPDGLAVLEALPADVKSHTVAYGTTARESLPDLGGAAYVWIASESETAGSGVEQLTLHLPAAVTAGEPVSQSVALKVPGVHNARNAAAAISAAVLLGVSPADAAKAAGTFLGAARRFQVRGTVKQVTVVDDYAHHPTEIAALLDAARRRYPDSTIRVIFQPHLFSRTKFFAHQFAKSLAKADDVIITGIFPAREKQADFPDISPSTIVDAAAGLKDASAGTWIQPVEDMCLAAKMMAMRAHHGDVIFTVGAGDITDMDQVLLTALEAHRESCE.

Residue 132-138 (GAHGKTT) coordinates ATP.

The protein belongs to the MurCDEF family.

It is found in the cytoplasm. The enzyme catalyses UDP-N-acetyl-alpha-D-muramate + L-alanine + ATP = UDP-N-acetyl-alpha-D-muramoyl-L-alanine + ADP + phosphate + H(+). Its pathway is cell wall biogenesis; peptidoglycan biosynthesis. Its function is as follows. Cell wall formation. The polypeptide is UDP-N-acetylmuramate--L-alanine ligase (Bifidobacterium longum (strain NCC 2705)).